The primary structure comprises 925 residues: Translation initiation factor IF-2 (925 aa).

Residues 190–329 are disordered; sequence PAAPTSEAAP…RRRDEREAAV (140 aa). Pro residues-rich tracts occupy residues 199 to 209, 217 to 238, and 279 to 288; these read PPEPEPTPLPA, PVRP…PAPR, and RPVPAQPAPQ. The segment covering 289–307 has biased composition (low complexity); the sequence is TPTRSGSGIAKKGAITKAG. Positions 320–329 are enriched in basic and acidic residues; that stretch reads RRRDEREAAV. The region spanning 417 to 589 is the tr-type G domain; sequence VRPPVVTIMG…LLLVADYELE (173 aa). Positions 426 to 433 are G1; it reads GHVDHGKT. 426-433 provides a ligand contact to GTP; sequence GHVDHGKT. The tract at residues 451–455 is G2; that stretch reads GITQH. The interval 476 to 479 is G3; sequence DTPG. Residues 476-480 and 530-533 each bind GTP; these read DTPGH and NKVD. The interval 530-533 is G4; sequence NKVD. Residues 566–568 are G5; that stretch reads SAK.

This sequence belongs to the TRAFAC class translation factor GTPase superfamily. Classic translation factor GTPase family. IF-2 subfamily.

Its subcellular location is the cytoplasm. Its function is as follows. One of the essential components for the initiation of protein synthesis. Protects formylmethionyl-tRNA from spontaneous hydrolysis and promotes its binding to the 30S ribosomal subunits. Also involved in the hydrolysis of GTP during the formation of the 70S ribosomal complex. The polypeptide is Translation initiation factor IF-2 (Gloeobacter violaceus (strain ATCC 29082 / PCC 7421)).